We begin with the raw amino-acid sequence, 135 residues long: Large ribosomal subunit protein bL19 (135 aa).

The protein belongs to the bacterial ribosomal protein bL19 family.

In terms of biological role, this protein is located at the 30S-50S ribosomal subunit interface and may play a role in the structure and function of the aminoacyl-tRNA binding site. This chain is Large ribosomal subunit protein bL19, found in Xanthomonas oryzae pv. oryzae (strain KACC10331 / KXO85).